The following is a 115-amino-acid chain: MKFVLLFGVLLVTLFSYSSAEMFDDFDQADEDELLSLIEKEEARAEECTPRFYDCSHDRHSCCRSELFKDVCTCFYPEGGDNEVCTCQQPKHLKYMEKAAGKAKKFGGKIKKWFG.

The signal sequence occupies residues 1-20; the sequence is MKFVLLFGVLLVTLFSYSSA. A propeptide spanning residues 21–44 is cleaved from the precursor; that stretch reads EMFDDFDQADEDELLSLIEKEEAR. 4 disulfide bridges follow: cysteine 48–cysteine 63, cysteine 55–cysteine 72, cysteine 62–cysteine 87, and cysteine 74–cysteine 85.

This sequence belongs to the neurotoxin 19 (CSTX) family. 01 subfamily. As to expression, expressed by the venom gland.

The protein resides in the secreted. The polypeptide is U3-lycotoxin-Ls1p (Lycosa singoriensis (Wolf spider)).